Consider the following 157-residue polypeptide: Protein-export protein SecB (157 aa).

Belongs to the SecB family. In terms of assembly, homotetramer, a dimer of dimers. One homotetramer interacts with 1 SecA dimer.

Its subcellular location is the cytoplasm. One of the proteins required for the normal export of preproteins out of the cell cytoplasm. It is a molecular chaperone that binds to a subset of precursor proteins, maintaining them in a translocation-competent state. It also specifically binds to its receptor SecA. The polypeptide is Protein-export protein SecB (Dichelobacter nodosus (strain VCS1703A)).